Reading from the N-terminus, the 684-residue chain is Frizzled-8 (684 aa).

Residues 1-27 (MEWGYLLEVTSLLAALAVLQRSSGAAA) form the signal peptide. Topologically, residues 28–271 (ASAKELACQE…NPFFSQDERA (244 aa)) are extracellular. The FZ domain occupies 30–151 (AKELACQEIT…GNPDTLCMDY (122 aa)). 5 disulfide bridges follow: Cys35-Cys96, Cys43-Cys89, Cys80-Cys118, Cys107-Cys148, and Cys111-Cys135. N-linked (GlcNAc...) asparagine glycosylation is present at Asn49. 71 to 78 (QFWPLVEI) contributes to the hexadecanoate binding site. The wnt-binding stretch occupies residues 95 to 100 (ICLEDY). A wnt-binding region spans residues 147–152 (LCMDYN). Asn152 is a glycosylation site (N-linked (GlcNAc...) asparagine). Residues 155–222 (DLTTAAPSPP…KARPPGGGAA (68 aa)) form a disordered region. The span at 161 to 175 (PSPPRRLPPPQPGEQ) shows a compositional bias: pro residues. Composition is skewed to low complexity over residues 176–186 (PPSGSGHSRPP) and 199–222 (GSGD…GGAA). A helical transmembrane segment spans residues 272-292 (FTVFWIGLWSVLCFVSTFATV). Residues 293–308 (STFLIDMERFKYPERP) lie on the Cytoplasmic side of the membrane. A helical membrane pass occupies residues 309–329 (IIFLSACYLFVSVGYLVRLVA). The Extracellular segment spans residues 330–393 (GHEKVACSGG…RYETTGPALC (64 aa)). Residues 394–414 (TVVFLLVYFFGMASSIWWVIL) traverse the membrane as a helical segment. At 415-436 (SLTWFLAAGMKWGNEAIAGYSQ) the chain is on the cytoplasmic side. A helical membrane pass occupies residues 437-457 (YFHLAAWLVPSVKSIAVLALS). Over 458–480 (SVDGDPVAGICYVGNQSLDNLRG) the chain is Extracellular. An N-linked (GlcNAc...) asparagine glycan is attached at Asn472. A helical membrane pass occupies residues 481-501 (FVLAPLVIYLFIGTMFLLAGF). At 502–529 (VSLFRIRSVIKQQGGPTKTHKLEKLMIR) the chain is on the cytoplasmic side. Residues 530 to 550 (LGLFTVLYTVPAAVVVACLFY) form a helical membrane-spanning segment. Residues 551–581 (EQHNRPRWEATHNCPCLRDLQPDQARRPDYA) are Extracellular-facing. A helical membrane pass occupies residues 582 to 602 (VFMLKYFMCLVVGITSGVWVW). Residues 603–684 (SGKTLESWRA…YPKQMPLSQV (82 aa)) lie on the Cytoplasmic side of the membrane. The Lys-Thr-X-X-X-Trp motif, mediates interaction with the PDZ domain of Dvl family members signature appears at 605–610 (KTLESW). Positions 630–654 (AGGSGPGGGGPGPGGGGGHGGGGGS) are enriched in gly residues. The tract at residues 630–655 (AGGSGPGGGGPGPGGGGGHGGGGGSL) is disordered. The PDZ-binding motif lies at 682–684 (SQV).

This sequence belongs to the G-protein coupled receptor Fz/Smo family. As to quaternary structure, component of a Wnt-signaling complex that contains a WNT protein, a FZD protein and LRP5 or LRP6. Interacts directly with LRP5 or LRP6; the interaction is promoted by Wnt-binding and signaling and inhibited by DKK1. Interacts (via the PDZ-binding motif) with GPOC (via its PDZ domain). Interacts with RSPO1 and RSPO3. Interacts with glypican GPC3. Ubiquitinated by ZNRF3, leading to its degradation by the proteasome.

The protein resides in the membrane. The protein localises to the golgi apparatus. It localises to the cell membrane. In terms of biological role, receptor for Wnt proteins. Component of the Wnt-Fzd-LRP5-LRP6 complex that triggers beta-catenin signaling through inducing aggregation of receptor-ligand complexes into ribosome-sized signalosomes. The beta-catenin canonical signaling pathway leads to the activation of disheveled proteins, inhibition of GSK-3 kinase, nuclear accumulation of beta-catenin and activation of Wnt target genes. A second signaling pathway involving PKC and calcium fluxes has been seen for some family members, but it is not yet clear if it represents a distinct pathway or if it can be integrated in the canonical pathway, as PKC seems to be required for Wnt-mediated inactivation of GSK-3 kinase. Both pathways seem to involve interactions with G-proteins. May be involved in transduction and intercellular transmission of polarity information during tissue morphogenesis and/or in differentiated tissues. Coreceptor along with RYK of Wnt proteins, such as WNT1. This chain is Frizzled-8 (Fzd8), found in Rattus norvegicus (Rat).